The primary structure comprises 98 residues: MMCGGTSATQPATAETQAIADKVKSQLEEKENKKFPVFKALEFKSQLVAGKNYFIKVQVDEDDFVHIRVFESLPHENKPVALTSYQTNKGRHDELTYF.

Residue Met1 is modified to N-acetylmethionine. The short motif at 46–50 (QLVAG) is the Secondary area of contact element.

The protein belongs to the cystatin family. In terms of assembly, able to form dimers stabilized by noncovalent forces.

Its subcellular location is the cytoplasm. In terms of biological role, this is an intracellular thiol proteinase inhibitor. This Bos taurus (Bovine) protein is Cystatin-B (CSTB).